A 213-amino-acid polypeptide reads, in one-letter code: BREX protein BrxA (213 aa).

This sequence belongs to the BrxA family.

In terms of biological role, BREX systems (bacteriophage exclusion) provide immunity against bacteriophage. A probably non-essential part of a type 1 BREX system which protects against dsDNA phage. This system allows phage adsorption but prevents phage DNA replication, without degradation of the phage DNA. Methylation of bacterial DNA by PglX guides self/non-self discrimination. When the brxA-brxB-brxC-pglX-pglZ-brxL genes are transformed into a susceptible E.coli strain (BW25113) they confer very high resistance to infection by bacteriophage VR7 and VpaE1, about 100-fold protection against lambda, T5 and T7 and no protection against RNA phage Qbeta, ssDNA phage M13 or dSDNA phage T4 and VR5. Glycosylated phage DNA is not susceptible to BREX. The BREX system does not confer resistance to lysogenic lambda phage, i.e. prophage that are integrated into the chromosomal DNA and then induced to form phage. This chain is BREX protein BrxA, found in Escherichia coli O9:H4 (strain HS).